Reading from the N-terminus, the 509-residue chain is Cytochrome P450 monooxygenase ORF9 (509 aa).

2 consecutive transmembrane segments (helical) span residues isoleucine 20–valine 40 and leucine 309–leucine 329. The N-linked (GlcNAc...) asparagine glycan is linked to asparagine 353. Cysteine 448 contacts heme.

It belongs to the cytochrome P450 family. The cofactor is heme.

It localises to the membrane. The protein operates within sesquiterpene biosynthesis. In terms of biological role, cytochrome P450 monooxygenase; part of the gene cluster that mediates the biosynthesis of PR-toxin, a bicyclic sesquiterpene belonging to the eremophilane class and acting as a mycotoxin. The first step of the pathway is catalyzed by the aristolochene synthase which performs the cyclization of trans,trans-farnesyl diphosphate (FPP) to the bicyclic sesquiterpene aristolochene. Following the formation of aristolochene, the non-oxygenated aristolochene is converted to the trioxygenated intermediate eremofortin B, via 7-epi-neopetasone. This conversion appears to involve three enzymes, a hydroxysterol oxidase-like enzyme, the quinone-oxidase prx3 that forms the quinone-type-structure in the bicyclic nucleus of aristolochene with the C8-oxo group and the C-3 hydroxyl group, and the P450 monooxygenase ORF6 that introduces the epoxide at the double bond between carbons 1 and 2. No monoxy or dioxy-intermediates have been reported to be released to the broth, so these three early oxidative reactions may be coupled together. Eremofortin B is further oxidized by another P450 monooxygenase, that introduces a second epoxide between carbons 7 and 11 prior to acetylation to eremofortin A by the acetyltransferase ORF8. The second epoxidation may be performed by a second P450 monooxygenase. After the acetylation step, eremofortin A is converted to eremofortin C and then to PR-toxin. First the conversion of eremofortin A to eremofortin C proceeds by oxidation of the side chain of the molecule at C-12 and is catalyzed by the short-chain oxidoreductase prx1. The cytochrome P450 monooxygenase ORF6 is probably also involved in this step. The primary alcohol formed at C-12 is finally oxidized by the short-chain alcohol dehydrogenase prx4 that forms PR-toxin. The polypeptide is Cytochrome P450 monooxygenase ORF9 (Penicillium roqueforti (strain FM164)).